A 551-amino-acid chain; its full sequence is Glucans biosynthesis protein D (551 aa).

The segment at residues 1–32 (MDRRRFIKGSMAMAAVCGTSGIASLFSQAAFA) is a signal peptide (tat-type signal).

The protein belongs to the OpgD/OpgG family. Post-translationally, predicted to be exported by the Tat system. The position of the signal peptide cleavage has not been experimentally proven.

The protein localises to the periplasm. The protein operates within glycan metabolism; osmoregulated periplasmic glucan (OPG) biosynthesis. In terms of biological role, probably involved in the control of the structural glucose backbone of osmoregulated periplasmic glucans (OPGs). The protein is Glucans biosynthesis protein D (mdoD) of Shigella flexneri.